We begin with the raw amino-acid sequence, 1460 residues long: Collagen alpha-1(I) chain (1460 aa).

A signal peptide spans 1-22; that stretch reads MFSFVDLRLLLLLAATALLTHG. Residues 23 to 157 constitute a propeptide, N-terminal propeptide; that stretch reads QEEGQEEDIP…PPGLGGNFAP (135 aa). The 59-residue stretch at 34-92 folds into the VWFC domain; it reads VTCVQNGLRYYDRDVWKPEACRICVCDNGNVLCDDVICDETKNCPGAQVPPGECCPVCP. The interval 96–1213 is disordered; the sequence is ASPTDQETTG…KAHDGGRYYR (1118 aa). Over residues 134-149 the composition is skewed to pro residues; the sequence is PGLPGPPGPPGPPGPP. The nonhelical region (N-terminal) stretch occupies residues 158-174; sequence QMSYGYDEKSTGGISVP. Lys-166 carries the allysine modification. Ser-167 bears the Phosphoserine mark. The tract at residues 175–1188 is triple-helical region; sequence GPMGPSGPRG…PGPPGPPGPP (1014 aa). 11 positions are modified to 4-hydroxyproline: Pro-186, Pro-189, Pro-192, Pro-201, Pro-204, Pro-207, Pro-222, Pro-237, Pro-243, Pro-252, and Pro-258. A compositionally biased stretch (low complexity) spans 194–213; it reads PQGFQGPPGEPGEPGASGPM. A compositionally biased stretch (basic and acidic residues) spans 225 to 239; that stretch reads NGDDGEAGKPGRPGE. Lys-261 carries the 5-hydroxylysine; alternate modification. Residue Lys-261 is glycosylated (O-linked (Gal...) hydroxylysine; alternate). Phosphoserine is present on Ser-267. Over residues 275–291 the composition is skewed to low complexity; sequence DAGPAGPKGEPGSPGEN. 4-hydroxyproline occurs at positions 285, 288, 294, 303, and 309. A compositionally biased stretch (low complexity) spans 314 to 327; that stretch reads PAGARGNDGATGAA. Positions 329–341 are enriched in pro residues; the sequence is PPGPTGPAGPPGF. Residues Pro-330, Pro-339, Pro-342, Pro-369, Pro-372, Pro-384, Pro-390, Pro-399, Pro-405, Pro-408, and Pro-423 each carry the 4-hydroxyproline modification. The segment covering 375–414 has biased composition (low complexity); that stretch reads AGAAGPAGNPGADGQPGAKGANGAPGIAGAPGFPGARGPS. Position 426 is a 5-hydroxylysine (Lys-426). Residues Pro-432, Pro-435, Pro-447, Pro-456, Pro-471, Pro-477, Pro-486, and Pro-492 each carry the 4-hydroxyproline modification. Positions 481–490 are enriched in gly residues; the sequence is GERGGPGSRG. Lys-501 carries the 5-hydroxylysine modification. 28 positions are modified to 4-hydroxyproline: Pro-510, Pro-519, Pro-525, Pro-531, Pro-540, Pro-543, Pro-552, Pro-561, Pro-567, Pro-579, Pro-588, Pro-597, Pro-600, Pro-618, Pro-636, Pro-642, Pro-648, Pro-654, Pro-660, Pro-666, Pro-678, Pro-687, Pro-699, Pro-711, Pro-714, Pro-720, Pro-726, and Pro-735. Positions 534–560 are enriched in low complexity; it reads KGLTGSPGSPGPDGKTGPPGPAGQDGR. The span at 569–588 shows a compositional bias: low complexity; it reads ARGQAGVMGFPGPKGAAGEP. Positions 630–657 are enriched in low complexity; that stretch reads QGPAGSPGFQGLPGPAGPPGEAGKPGEQ. Positions 692 to 720 are enriched in low complexity; sequence PRGANGAPGNDGAKGDAGAPGAPGSQGAP. Positions 741–743 match the Cell attachment site motif; that stretch reads RGD. 5-hydroxylysine is present on Lys-747. 4-hydroxyproline is present on residues Pro-753, Pro-768, and Pro-774. Over residues 780–794 the composition is skewed to low complexity; sequence AGPSGPAGPTGARGA. Ser-783 is subject to Phosphoserine. 8 positions are modified to 4-hydroxyproline: Pro-795, Pro-801, Pro-804, Pro-813, Pro-819, Pro-837, Pro-846, and Pro-855. Over residues 807-834 the composition is skewed to low complexity; the sequence is AGFAGPPGADGQPGAKGEPGDAGAKGDA. Pro residues predominate over residues 836–848; the sequence is PPGPAGPTGPPGP. A 5-hydroxylysine modification is found at Lys-858. The span at 863–879 shows a compositional bias: low complexity; that stretch reads SAGPPGATGFPGAAGRV. 4-hydroxyproline occurs at positions 867 and 873. Pro-881 is modified (3-hydroxyproline). A 4-hydroxyproline mark is found at Pro-882, Pro-891, Pro-894, Pro-915, Pro-924, Pro-933, Pro-942, Pro-960, Pro-969, Pro-972, Pro-978, Pro-993, Pro-999, Pro-1005, Pro-1014, and Pro-1020. Residues 908 to 917 show a composition bias toward low complexity; sequence ETGPAGRPGE. The span at 927–951 shows a compositional bias: low complexity; it reads AGEKGSPGADGPAGAPGTPGPQGIA. Residues 992-1002 are compositionally biased toward pro residues; it reads PPGPMGPPGLA. The segment covering 1004–1019 has biased composition (low complexity); sequence PPGESGREGSPGAEGS. The residue at position 1029 (Lys-1029) is a 5-hydroxylysine. Over residues 1038 to 1053 the composition is skewed to pro residues; the sequence is AGPPGAPGAPGAPGPV. A 4-hydroxyproline mark is found at Pro-1041, Pro-1044, and Pro-1047. The segment covering 1074-1088 has biased composition (low complexity); it reads IGPVGARGPAGPQGP. Positions 1089–1091 match the Cell attachment site motif; the sequence is RGD. The segment covering 1089–1103 has biased composition (basic and acidic residues); sequence RGDKGETGEQGDRGI. Position 1092 is a 5-hydroxylysine (Lys-1092). A 5-hydroxylysine; alternate modification is found at Lys-1104. Lys-1104 carries an O-linked (Gal...) hydroxylysine; alternate glycan. 4-hydroxyproline occurs at positions 1116, 1119, 1122, 1140, and 1155. Residues 1122–1155 are compositionally biased toward low complexity; sequence PGEQGPSGASGPAGPRGPPGSAGSPGKDGLNGLP. Pro-1160 carries the 3-hydroxyproline modification. Position 1161 is a 4-hydroxyproline (Pro-1161). Residues 1173-1188 show a composition bias toward pro residues; it reads VGPPGPPGPPGPPGPP. Residue Pro-1175 is modified to 3-hydroxyproline. Residue Pro-1176 is modified to 4-hydroxyproline. At Pro-1178 the chain carries 3-hydroxyproline. A 4-hydroxyproline modification is found at Pro-1179. Position 1181 is a 3-hydroxyproline (Pro-1181). 4-hydroxyproline is present on residues Pro-1182, Pro-1185, and Pro-1188. The tract at residues 1189–1214 is nonhelical region (C-terminal); that stretch reads SGGFDFSFLPQPPQEKAHDGGRYYRA. Positions 1203-1213 are enriched in basic and acidic residues; the sequence is EKAHDGGRYYR. Residue Lys-1204 is modified to Allysine. A propeptide spans 1215–1460 (C-terminal propeptide); it reads DDANVVRDRD…GMDIGPVCFL (246 aa). One can recognise a Fibrillar collagen NC1 domain in the interval 1225 to 1460; the sequence is LEVDTTLKSL…GMDIGPVCFL (236 aa). 3 disulfide bridges follow: Cys-1255–Cys-1287, Cys-1295–Cys-1458, and Cys-1366–Cys-1411. Residues Asp-1273, Asn-1275, Gln-1276, Cys-1278, and Asp-1281 each coordinate Ca(2+). A glycan (N-linked (GlcNAc...) asparagine) is linked at Asn-1361.

It belongs to the fibrillar collagen family. Trimers of one alpha 2(I) and two alpha 1(I) chains. Interacts with MRC2. Interacts with TRAM2. Interacts with MFAP4 in a Ca (2+)-dependent manner. In terms of processing, contains mostly 4-hydroxyproline. Proline residues at the third position of the tripeptide repeating unit (G-X-Y) are hydroxylated in some or all of the chains. Post-translationally, contains 3-hydroxyproline at a few sites. This modification occurs on the first proline residue in the sequence motif Gly-Pro-Hyp, where Hyp is 4-hydroxyproline. Lysine residues at the third position of the tripeptide repeating unit (G-X-Y) are 5-hydroxylated in some or all of the chains. In terms of processing, O-glycosylated on hydroxylated lysine residues. The O-linked glycan consists of a Glc-Gal disaccharide.

It localises to the secreted. The protein localises to the extracellular space. The protein resides in the extracellular matrix. Functionally, type I collagen is a member of group I collagen (fibrillar forming collagen). The sequence is that of Collagen alpha-1(I) chain (COL1A1) from Canis lupus familiaris (Dog).